Here is a 214-residue protein sequence, read N- to C-terminus: MILILLGPPGAGKGTQAKLLSTELGIPHISTGDMFRDHKARGTEIGKQVQAIMDGGGLVTDDITNAMVKERLSRPDVAPGFILDGYPRTVVQAEYLDGLLRSLGRSIGRALSYEVAEELVVERISGRRSCPRCGAVYHVSQNPPRRAGYCDRDDAELVQREDDKPENVRKRMQEYGTKTEPLKRYYRDRGELTEVEGVGTPEGILAATKKVLGR.

G10–T15 is a binding site for ATP. Residues S30 to V59 are NMP. Residues T31, R36, G57–V59, G85–R88, and Q92 each bind AMP. The LID stretch occupies residues G126–D163. Residue R127 participates in ATP binding. Zn(2+) is bound by residues C130 and C133. V136–Y137 serves as a coordination point for ATP. Zn(2+) contacts are provided by C150 and D153. The AMP site is built by R160 and R171. ATP is bound at residue G199.

This sequence belongs to the adenylate kinase family. As to quaternary structure, monomer.

Its subcellular location is the cytoplasm. The enzyme catalyses AMP + ATP = 2 ADP. It participates in purine metabolism; AMP biosynthesis via salvage pathway; AMP from ADP: step 1/1. Its function is as follows. Catalyzes the reversible transfer of the terminal phosphate group between ATP and AMP. Plays an important role in cellular energy homeostasis and in adenine nucleotide metabolism. This is Adenylate kinase from Anaeromyxobacter dehalogenans (strain 2CP-C).